A 246-amino-acid polypeptide reads, in one-letter code: Probable transcriptional regulatory protein CA_C2295 (246 aa).

It belongs to the TACO1 family.

It is found in the cytoplasm. This is Probable transcriptional regulatory protein CA_C2295 from Clostridium acetobutylicum (strain ATCC 824 / DSM 792 / JCM 1419 / IAM 19013 / LMG 5710 / NBRC 13948 / NRRL B-527 / VKM B-1787 / 2291 / W).